Here is a 158-residue protein sequence, read N- to C-terminus: Cyclic pyranopterin monophosphate synthase (158 aa).

Substrate contacts are provided by residues 74–76 and 112–113; these read MCH and ME. The active site involves aspartate 127.

This sequence belongs to the MoaC family. As to quaternary structure, homohexamer; trimer of dimers.

The enzyme catalyses (8S)-3',8-cyclo-7,8-dihydroguanosine 5'-triphosphate = cyclic pyranopterin phosphate + diphosphate. It functions in the pathway cofactor biosynthesis; molybdopterin biosynthesis. Functionally, catalyzes the conversion of (8S)-3',8-cyclo-7,8-dihydroguanosine 5'-triphosphate to cyclic pyranopterin monophosphate (cPMP). This Helicobacter pylori (strain G27) protein is Cyclic pyranopterin monophosphate synthase.